The following is a 75-amino-acid chain: Translational regulator CsrA (75 aa).

It belongs to the CsrA/RsmA family. In terms of assembly, homodimer; the beta-strands of each monomer intercalate to form a hydrophobic core, while the alpha-helices form wings that extend away from the core.

The protein resides in the cytoplasm. Functionally, a translational regulator that binds mRNA to regulate translation initiation and/or mRNA stability. Usually binds in the 5'-UTR at or near the Shine-Dalgarno sequence preventing ribosome-binding, thus repressing translation. Its main target seems to be the major flagellin gene, while its function is anatagonized by FliW. The protein is Translational regulator CsrA of Exiguobacterium sp. (strain ATCC BAA-1283 / AT1b).